Consider the following 651-residue polypeptide: Aspartate--tRNA ligase, mitochondrial (651 aa).

The N-terminal 44 residues, 1–44, are a transit peptide targeting the mitochondrion; the sequence is MFCWLSRLCGELSTPTRRTTQLIWSSAARSMVLSSQRIPELSSF. Position 216 is a phosphothreonine (Thr-216). Ser-239 is modified (phosphoserine). The tract at residues 241-244 is aspartate; that stretch reads QQFK. L-aspartate is bound at residue Arg-263. Residue 263–265 coordinates ATP; sequence RDE. Lys-379 carries the N6-acetyllysine modification. Glu-532 is a binding site for ATP. Arg-539 provides a ligand contact to L-aspartate. 581–584 serves as a coordination point for ATP; that stretch reads GLDR.

The protein belongs to the class-II aminoacyl-tRNA synthetase family. Type 1 subfamily. Homodimer.

The protein localises to the mitochondrion matrix. It is found in the mitochondrion membrane. It carries out the reaction tRNA(Asp) + L-aspartate + ATP = L-aspartyl-tRNA(Asp) + AMP + diphosphate. In terms of biological role, catalyzes the attachment of aspartate to tRNA(Asp) in a two-step reaction: aspartate is first activated by ATP to form Asp-AMP and then transferred to the acceptor end of tRNA(Asp). In Bos taurus (Bovine), this protein is Aspartate--tRNA ligase, mitochondrial (DARS2).